The sequence spans 321 residues: MGEPHGSMRILVTGGSGLVGRAIQKVVADGAGLPGEEWVFVSSKDADLTDAAQTQALFQKVQPTHVIHLAAMVGGLFRNIKYNLDFWRKNVHINDNVLHSAFEVGARKVVSCLSTCIFPDKTTYPIDETMIHNGPPHSSNFGYSYAKRMIDVQNRAYFQQHGCTFTAVIPTNVFGPYDNFNIEDGHVLPGLIHKVHLAKSSDSALTVWGTGKPRRQFIYSLDLARLFIWVLREYSEVEPIILSVGEEDEVSIKEAAEAVVEAMDFNGEVTFDSTKSDGQYKKTASNGKLRSYLPDFRFTPFKQAVKETCTWFTDNYEQARK.

Residue 14-20 (GGSGLVG) participates in NADP(+) binding. Tyrosine 143 serves as the catalytic Proton donor/acceptor. NADP(+) is bound by residues lysine 147, 170–173 (PTNV), and histidine 186. Lysine 194, tryptophan 208, arginine 215, and aspartate 277 together coordinate substrate.

The protein belongs to the NAD(P)-dependent epimerase/dehydratase family. Fucose synthase subfamily. In terms of assembly, homodimer.

The enzyme catalyses GDP-beta-L-fucose + NADP(+) = GDP-4-dehydro-alpha-D-rhamnose + NADPH + H(+). It participates in nucleotide-sugar biosynthesis; GDP-L-fucose biosynthesis via de novo pathway; GDP-L-fucose from GDP-alpha-D-mannose: step 2/2. In terms of biological role, catalyzes the two-step NADP-dependent conversion of GDP-4-dehydro-6-deoxy-D-mannose to GDP-fucose, involving an epimerase and a reductase reaction. This Mus musculus (Mouse) protein is GDP-L-fucose synthase.